Consider the following 260-residue polypeptide: tRNA pseudouridine synthase A (260 aa).

The active-site Nucleophile is the Asp-60. Residue Tyr-118 participates in substrate binding.

It belongs to the tRNA pseudouridine synthase TruA family. In terms of assembly, homodimer.

The catalysed reaction is uridine(38/39/40) in tRNA = pseudouridine(38/39/40) in tRNA. In terms of biological role, formation of pseudouridine at positions 38, 39 and 40 in the anticodon stem and loop of transfer RNAs. The polypeptide is tRNA pseudouridine synthase A (Leuconostoc citreum (strain KM20)).